A 307-amino-acid chain; its full sequence is Small ribosomal subunit biogenesis GTPase RsgA (307 aa).

The tract at residues methionine 1 to asparagine 21 is disordered. The span at glycine 10–asparagine 21 shows a compositional bias: polar residues. The CP-type G domain occupies arginine 85–phenylalanine 242. Residues asparagine 135–aspartate 138 and glycine 184–threonine 192 contribute to the GTP site. Zn(2+)-binding residues include cysteine 266, cysteine 271, histidine 273, and cysteine 279.

The protein belongs to the TRAFAC class YlqF/YawG GTPase family. RsgA subfamily. In terms of assembly, monomer. Associates with 30S ribosomal subunit, binds 16S rRNA. Zn(2+) is required as a cofactor.

It is found in the cytoplasm. One of several proteins that assist in the late maturation steps of the functional core of the 30S ribosomal subunit. Helps release RbfA from mature subunits. May play a role in the assembly of ribosomal proteins into the subunit. Circularly permuted GTPase that catalyzes slow GTP hydrolysis, GTPase activity is stimulated by the 30S ribosomal subunit. The sequence is that of Small ribosomal subunit biogenesis GTPase RsgA from Neisseria gonorrhoeae (strain ATCC 700825 / FA 1090).